Here is a 75-residue protein sequence, read N- to C-terminus: ATP synthase subunit 9, mitochondrial (75 aa).

Transmembrane regions (helical) follow at residues 10-30 and 55-75; these read LVLGLCMLPISAAALGVGILF and FALVETFVFMSFFFGVIVYFI.

It belongs to the ATPase C chain family. F-type ATPases have 2 components, CF(1) - the catalytic core - and CF(0) - the membrane proton channel. CF(1) has five subunits: alpha(3), beta(3), gamma(1), delta(1), epsilon(1). CF(0) has three main subunits: a, b and c.

It localises to the mitochondrion membrane. In terms of biological role, mitochondrial membrane ATP synthase (F(1)F(0) ATP synthase or Complex V) produces ATP from ADP in the presence of a proton gradient across the membrane which is generated by electron transport complexes of the respiratory chain. F-type ATPases consist of two structural domains, F(1) - containing the extramembraneous catalytic core and F(0) - containing the membrane proton channel, linked together by a central stalk and a peripheral stalk. During catalysis, ATP synthesis in the catalytic domain of F(1) is coupled via a rotary mechanism of the central stalk subunits to proton translocation. Part of the complex F(0) domain. A homomeric c-ring of probably 10 subunits is part of the complex rotary element. This Paramecium tetraurelia protein is ATP synthase subunit 9, mitochondrial (ATP9).